We begin with the raw amino-acid sequence, 122 residues long: Large ribosomal subunit protein uL14 (122 aa).

It belongs to the universal ribosomal protein uL14 family. Part of the 50S ribosomal subunit. Forms a cluster with proteins L3 and L19. In the 70S ribosome, L14 and L19 interact and together make contacts with the 16S rRNA in bridges B5 and B8.

Binds to 23S rRNA. Forms part of two intersubunit bridges in the 70S ribosome. This chain is Large ribosomal subunit protein uL14, found in Dehalococcoides mccartyi (strain ATCC BAA-2100 / JCM 16839 / KCTC 5957 / BAV1).